Consider the following 584-residue polypeptide: Methionine--tRNA ligase (584 aa).

The short motif at 12 to 22 is the 'HIGH' region element; the sequence is PYANGDLHLGH. Zn(2+) is bound by residues C144, C147, C157, and C160. Residues 334–338 carry the 'KMSKS' region motif; that stretch reads QFSTS. T337 serves as a coordination point for ATP. Positions 541 to 563 are disordered; sequence EGRDRWAPSELEAGRPLPPPQPL.

This sequence belongs to the class-I aminoacyl-tRNA synthetase family. MetG type 1 subfamily. As to quaternary structure, monomer. It depends on Zn(2+) as a cofactor.

Its subcellular location is the cytoplasm. The catalysed reaction is tRNA(Met) + L-methionine + ATP = L-methionyl-tRNA(Met) + AMP + diphosphate. In terms of biological role, is required not only for elongation of protein synthesis but also for the initiation of all mRNA translation through initiator tRNA(fMet) aminoacylation. This chain is Methionine--tRNA ligase, found in Thermomicrobium roseum (strain ATCC 27502 / DSM 5159 / P-2).